A 560-amino-acid polypeptide reads, in one-letter code: DNA ligase B (560 aa).

Residue K124 is the N6-AMP-lysine intermediate of the active site.

This sequence belongs to the NAD-dependent DNA ligase family. LigB subfamily.

The enzyme catalyses NAD(+) + (deoxyribonucleotide)n-3'-hydroxyl + 5'-phospho-(deoxyribonucleotide)m = (deoxyribonucleotide)n+m + AMP + beta-nicotinamide D-nucleotide.. Its function is as follows. Catalyzes the formation of phosphodiester linkages between 5'-phosphoryl and 3'-hydroxyl groups in double-stranded DNA using NAD as a coenzyme and as the energy source for the reaction. The chain is DNA ligase B from Shigella flexneri serotype 5b (strain 8401).